The sequence spans 683 residues: Protein kinase C eta type (683 aa).

Positions 1–118 (MSSGTMKFNG…LRTTGASDTF (118 aa)) constitute a C2 domain. Phosphoserine; by autocatalysis is present on residues serine 28 and serine 32. Phorbol-ester/DAG-type zinc fingers lie at residues 171–222 (GHKF…VTAC) and 245–295 (PHKF…APNC). Serine 317 is modified (phosphoserine). Residues 320 to 342 (SKLVSRSTLRRQGKESSKEGNGI) form a disordered region. The region spanning 355–614 (FEFIRVLGKG…EHAILRHPFF (260 aa)) is the Protein kinase domain. Residues 361–369 (LGKGSFGKV) and lysine 384 each bind ATP. The Proton acceptor role is filled by aspartate 479. Threonine 513 carries the post-translational modification Phosphothreonine; by PDPK1. The 69-residue stretch at 615–683 (KEIDWAQLNH…FSYVSPELQP (69 aa)) folds into the AGC-kinase C-terminal domain. A Phosphothreonine modification is found at threonine 656. Position 675 is a phosphoserine (serine 675).

This sequence belongs to the protein kinase superfamily. AGC Ser/Thr protein kinase family. PKC subfamily. As to quaternary structure, interacts with FYN. Interacts with RALA. Interacts with DGKQ. Interacts with PRKCH upstream open reading frame 2; the interaction leads to inhibition of kinase activity. In terms of tissue distribution, most abundant in lung, less in heart and skin.

Its subcellular location is the cytoplasm. The catalysed reaction is L-seryl-[protein] + ATP = O-phospho-L-seryl-[protein] + ADP + H(+). The enzyme catalyses L-threonyl-[protein] + ATP = O-phospho-L-threonyl-[protein] + ADP + H(+). With respect to regulation, novel PKCs (PRKCD, PRKCE, PRKCH and PRKCQ) are calcium-insensitive, but activated by diacylglycerol (DAG) and phosphatidylserine. Three specific sites; Thr-513 (activation loop of the kinase domain), Thr-656 (turn motif) and Ser-675 (hydrophobic region), need to be phosphorylated for its full activation. Inhibited by PRKCH upstream open reading frame 2. Its function is as follows. Calcium-independent, phospholipid- and diacylglycerol (DAG)-dependent serine/threonine-protein kinase that is involved in the regulation of cell differentiation in keratinocytes and pre-B cell receptor, mediates regulation of epithelial tight junction integrity and foam cell formation, and is required for glioblastoma proliferation and apoptosis prevention in MCF-7 cells. In keratinocytes, binds and activates the tyrosine kinase FYN, which in turn blocks epidermal growth factor receptor (EGFR) signaling and leads to keratinocyte growth arrest and differentiation. Associates with the cyclin CCNE1-CDK2-CDKN1B complex and inhibits CDK2 kinase activity, leading to RB1 dephosphorylation and thereby G1 arrest in keratinocytes. In association with RALA activates actin depolymerization, which is necessary for keratinocyte differentiation. In the pre-B cell receptor signaling, functions downstream of BLNK by up-regulating IRF4, which in turn activates L chain gene rearrangement. Regulates epithelial tight junctions (TJs) by phosphorylating occludin (OCLN) on threonine residues, which is necessary for the assembly and maintenance of TJs. In association with PLD2 and via TLR4 signaling, is involved in lipopolysaccharide (LPS)-induced RGS2 down-regulation and foam cell formation. Upon PMA stimulation, mediates glioblastoma cell proliferation by activating the mTOR pathway, the PI3K/AKT pathway and the ERK1-dependent phosphorylation of ELK1. Involved in the protection of glioblastoma cells from irradiation-induced apoptosis by preventing caspase-9 activation. In camptothecin-treated MCF-7 cells, regulates NF-kappa-B upstream signaling by activating IKBKB, and confers protection against DNA damage-induced apoptosis. Promotes oncogenic functions of ATF2 in the nucleus while blocking its apoptotic function at mitochondria. Phosphorylates ATF2 which promotes its nuclear retention and transcriptional activity and negatively regulates its mitochondrial localization. The protein is Protein kinase C eta type (PRKCH) of Homo sapiens (Human).